Consider the following 338-residue polypeptide: Phytanoyl-CoA dioxygenase, peroxisomal (338 aa).

Residues Met1–Val30 constitute a peroxisome transit peptide. An N6-succinyllysine mark is found at Lys59 and Lys108. 2-oxoglutarate is bound by residues Lys120, Met157, His175–Asp177, and Trp193. 2 residues coordinate Fe cation: His175 and Asp177. N6-succinyllysine occurs at positions 231 and 252. His264 provides a ligand contact to Fe cation. 2 residues coordinate 2-oxoglutarate: Ser266 and Arg275.

This sequence belongs to the PhyH family. In terms of assembly, interacts specifically with FKBP52 and PHYHIP. Requires Fe cation as cofactor. L-ascorbate serves as cofactor. It depends on ATP as a cofactor. Mg(2+) is required as a cofactor.

It localises to the peroxisome. It catalyses the reaction phytanoyl-CoA + 2-oxoglutarate + O2 = 2-hydroxyphytanoyl-CoA + succinate + CO2. It carries out the reaction 3-methylhexadecanoyl-CoA + 2-oxoglutarate + O2 = 2-hydroxy-3-methylhexadecanoyl-CoA + succinate + CO2. The catalysed reaction is hexadecanoyl-CoA + 2-oxoglutarate + O2 = 2-hydroxyhexadecanoyl-CoA + succinate + CO2. The enzyme catalyses octanoyl-CoA + 2-oxoglutarate + O2 = 2-hydroxyoctanoyl-CoA + succinate + CO2. It catalyses the reaction decanoyl-CoA + 2-oxoglutarate + O2 = 2-hydroxydecanoyl-CoA + succinate + CO2. It carries out the reaction 3-methylbutanoyl-CoA + 2-oxoglutarate + O2 = 2-hydroxy-3-methylbutanoyl-CoA + succinate + CO2. The catalysed reaction is heptadecanoyl-CoA + 2-oxoglutarate + O2 = 2-hydroxyheptadecanoyl-CoA + succinate + CO2. The enzyme catalyses eicosanoyl-CoA + 2-oxoglutarate + O2 = 2-hydroxyeicosanoyl-CoA + succinate + CO2. It catalyses the reaction octadecanoyl-CoA + 2-oxoglutarate + O2 = 2-hydroxyoctadecanoyl-CoA + succinate + CO2. It carries out the reaction dodecanoyl-CoA + 2-oxoglutarate + O2 = 2-hydroxydodecanoyl-CoA + succinate + CO2. The catalysed reaction is tetradecanoyl-CoA + 2-oxoglutarate + O2 = 2-hydroxytetradecanoyl-CoA + succinate + CO2. The enzyme catalyses hexanoyl-CoA + 2-oxoglutarate + O2 = 2-hydroxyhexanoyl-CoA + succinate + CO2. It catalyses the reaction butanoyl-CoA + 2-oxoglutarate + O2 = 2-hydroxybutanoyl-CoA + succinate + CO2. It carries out the reaction 3-methylnonanoyl-CoA + 2-oxoglutarate + O2 = 2-hydroxy-3-methylnonanoyl-CoA + succinate + CO2. The catalysed reaction is 3-methylundecanoyl-CoA + 2-oxoglutarate + O2 = 2-hydroxy-3-methylundecanoyl-CoA + succinate + CO2. The enzyme catalyses 3-methyldodecanoyl-CoA + 2-oxoglutarate + O2 = 2-hydroxy-3-methyldodecanoyl-CoA + succinate + CO2. It participates in lipid metabolism; fatty acid metabolism. Catalyzes the 2-hydroxylation of racemic phytanoyl-CoA and the isomers of 3-methylhexadecanoyl-CoA. Shows activity also towards a variety of other mono-branched 3-methylacyl-CoA esters (with a chain length of at least seven carbon atoms) and straight-chain acyl-CoA esters (with a chain length longer than four carbon atoms). Does not hydroxylate long and very long straight chain acyl-CoAs or 2-methyl-and 4-methyl-branched acyl-CoAs. The chain is Phytanoyl-CoA dioxygenase, peroxisomal (Phyh) from Rattus norvegicus (Rat).